We begin with the raw amino-acid sequence, 1132 residues long: MAAGKSGGSAGALFLKALDRSESKRDGGFKNNWSFDHEEESEGDADKDGANLLSVEDEDSEISKGKKLNRRSEIVATSSGDFILKTYVRRSKTDGFKTLKGNPIGLNMLSNNKKLSESTAGTALCSGTVVHGRRFHHAHSQTPGIRTAAQRKEYPPYVHKAENSPVMLSHGQGGDHIMKKTEESESYVESEIKRKVQQKRHCSTYQLSPLSPASKKCLTHLEVSEQREYCPKCGKEKENQTKCQSCGIVFHNDLQRNCRQAVTLNEPTGPLLRTSIHQNSGGQKSQNTGLTAKKFYGNSVDKIPIDILVTCDDSRHNYIQTNGKVILPGGKIPKLTNPKERKISVSDLNDPIILSSDDDDDDDDRTKRRESTSPKPADSACSSPVPSTGKVEAALNADACRAEQEPRSSPAEPELNTIVIPRKARMKDQLGNSISTPLKRRKVNSHAAFIHPMSLSCQNFESVILNCRSIRVGTLFRLLVEPVIFSLESITIHLDGPESDPVDIILNTSDLTKCEWCNVRKLPVVFLQAIPAVYQKLSMQLQMSKEDKVWNDCKGINRITSLEEQYIILIFQTGLDHQAEVVFESIITDIGIRNNVPNFFAKILFDEANSRLVACTRSYEESIKGNCAQKENKVKTVSFESKIQLRSKQELQFFDDDEEAGESHTIFIGPVEKLIVYPPPPAKGGISVTNEDLHCLSEGEFLNDVIIDFYLKYLVLEKLKKEDADRIHIFSSFFYKRLNQRERRNPETTNLSIQQKRHGRVKTWTRHVDIFEKDFIFVPLNEAAHWFLAVVCFPGLEKPKYEPNPHYHENAVMQKTPSAEDSCVSSASEMGACSQNSAAKPVIKKMLNRKHCLAVTDSSAAQEESEPCYRRNAYSVKCSMKKKNHAINENEEPSNGESTCQDICDRTQSENGLRDECFSSVHHPDALSKIRLNYGDQSADGGKLLEDELIDFSEDQDDPDDSSDDGLLADENYSSEIGQWHLKPTVCKQPCILLMDSLRGPSRSNVVKILREYLEVEWEVKKGSKRSFSKDVMKGSNPKVPQQNNFSDCGVYVLQYVESFFENPVLNFELPMNLMNWFPPPRMKTKREEIRNIILKLQESQSKDKKLLKDSLAETSLGDGAEQYASASGGSE.

Disordered stretches follow at residues 23–51 (SKRDGGFKNNWSFDHEEESEGDADKDGAN) and 327–388 (LPGG…VPST). Phosphoserine is present on residues Ser41, Ser355, Ser356, Ser371, and Ser373. At Thr436 the chain carries Phosphothreonine. Residue Lys648 forms a Glycyl lysine isopeptide (Lys-Gly) (interchain with G-Cter in SUMO2) linkage. The protease stretch occupies residues 686–1132 (ISVTNEDLHC…QYASASGGSE (447 aa)). Catalysis depends on residues His785 and Asp936. Residue Ser938 is modified to Phosphoserine. Residue Cys1049 is part of the active site. Ser1131 carries the phosphoserine modification.

Belongs to the peptidase C48 family. As to quaternary structure, interacts with RXRA. Forms a complex with KAT5-TIP60 and UBE2I in response to UV irradiation. Interacts with RPA1 to maintain it in hyposumoylated state during S phase preventing DNA repair initiation.

It localises to the nucleus. It participates in protein modification; protein sumoylation. In terms of biological role, protease that deconjugates SUMO1, SUMO2 and SUMO3 from targeted proteins. Processes preferentially poly-SUMO2 and poly-SUMO3 chains, but does not efficiently process SUMO1, SUMO2 and SUMO3 precursors. Deconjugates SUMO1 from RXRA, leading to transcriptional activation. Involved in chromosome alignment and spindle assembly, by regulating the kinetochore CENPH-CENPI-CENPK complex. Desumoylates PML and CENPI, protecting them from degradation by the ubiquitin ligase RNF4, which targets polysumoylated proteins for proteasomal degradation. Also desumoylates RPA1, thus preventing recruitment of RAD51 to the DNA damage foci to initiate DNA repair through homologous recombination. This chain is Sentrin-specific protease 6 (Senp6), found in Mus musculus (Mouse).